A 475-amino-acid polypeptide reads, in one-letter code: uncharacterized protein (475 aa).

Residues 19–39 (IKVGVFFVAILLILTGILLTI) form a helical membrane-spanning segment. Disordered stretches follow at residues 55–79 (GEYHELNTSPNENSTALQPDENATS) and 330–350 (SSPFNPNRRHPVTGRIRPHKG). A compositionally biased stretch (polar residues) spans 60–79 (LNTSPNENSTALQPDENATS). Basic residues predominate over residues 336–348 (NRRHPVTGRIRPH). Zn(2+) is bound at residue His-348.

This sequence in the central section; belongs to the OapA family. The protein in the C-terminal section; belongs to the peptidase M23B family. Zn(2+) serves as cofactor.

The protein resides in the cell membrane. This is an uncharacterized protein from Haemophilus influenzae (strain ATCC 51907 / DSM 11121 / KW20 / Rd).